Consider the following 310-residue polypeptide: Aspartate carbamoyltransferase catalytic subunit (310 aa).

2 residues coordinate carbamoyl phosphate: Arg55 and Thr56. Lys85 is an L-aspartate binding site. Carbamoyl phosphate-binding residues include Arg106, His135, and Gln138. L-aspartate is bound by residues Arg168 and Arg230. Carbamoyl phosphate-binding residues include Leu268 and Pro269.

The protein belongs to the aspartate/ornithine carbamoyltransferase superfamily. ATCase family. As to quaternary structure, heterododecamer (2C3:3R2) of six catalytic PyrB chains organized as two trimers (C3), and six regulatory PyrI chains organized as three dimers (R2).

The enzyme catalyses carbamoyl phosphate + L-aspartate = N-carbamoyl-L-aspartate + phosphate + H(+). Its pathway is pyrimidine metabolism; UMP biosynthesis via de novo pathway; (S)-dihydroorotate from bicarbonate: step 2/3. In terms of biological role, catalyzes the condensation of carbamoyl phosphate and aspartate to form carbamoyl aspartate and inorganic phosphate, the committed step in the de novo pyrimidine nucleotide biosynthesis pathway. The chain is Aspartate carbamoyltransferase catalytic subunit from Buchnera aphidicola subsp. Acyrthosiphon pisum (strain APS) (Acyrthosiphon pisum symbiotic bacterium).